The chain runs to 394 residues: Guanine nucleotide-binding protein G(s) subunit alpha isoforms short (394 aa).

Residues 1–23 (MGCLGNSKTEDQRNEEKAQREAN) form a disordered region. G2 carries N-palmitoyl glycine lipidation. Residue C3 is the site of S-palmitoyl cysteine attachment. Residues 8–23 (KTEDQRNEEKAQREAN) are compositionally biased toward basic and acidic residues. The G-alpha domain maps to 39–394 (ATHRLLLLGA…RMHLRQYELL (356 aa)). The segment at 42-55 (RLLLLGAGESGKST) is G1 motif. 47–55 (GAGESGKST) provides a ligand contact to GTP. S54 provides a ligand contact to Mg(2+). Positions 68–90 (FNGEGGEEDPQAARSNSDGEKAT) are disordered. Positions 196–204 (DLLRCRVLT) are G2 motif. GTP contacts are provided by residues 197-204 (LLRCRVLT), 223-227 (DVGGQ), and 292-295 (NKQD). T204 lines the Mg(2+) pocket. The tract at residues 219 to 228 (FHMFDVGGQR) is G3 motif. The G4 motif stretch occupies residues 288–295 (ILFLNKQD). A Glycyl lysine isopeptide (Lys-Gly) (interchain with G-Cter in ubiquitin) cross-link involves residue K300. Phosphoserine is present on S352. Positions 364 to 369 (TCAVDT) are G5 motif. A366 is a GTP binding site.

The protein belongs to the G-alpha family. G(s) subfamily. As to quaternary structure, heterotrimeric G proteins are composed of 3 units; alpha, beta and gamma. The alpha chain contains the guanine nucleotide binding site. Component of the TAS2R14-GNAS2 complex, consisting of TAS2R14, GNAS2, GNB1 and GNG2; within the complex interacts with TAS2R14; this complex plays a role in the perception of bitterness. Interacts with CRY1; the interaction may block GPCR-mediated regulation of cAMP concentrations. Interacts with ADCY6 and stimulates its adenylyl cyclase activity. Interacts with ADCY2 and ADCY5. Interacts (GDP-bound form) with RIC8B; promoting GNAS folding and association with the plasma membrane. Stimulates the ADCY5 adenylyl cyclase activity. Interaction with SASH1. Interacts with GASL2L2.

The protein localises to the cell membrane. It carries out the reaction GTP + H2O = GDP + phosphate + H(+). In terms of biological role, guanine nucleotide-binding proteins (G proteins) function as transducers in numerous signaling pathways controlled by G protein-coupled receptors (GPCRs). The alpha chain contains the guanine nucleotide binding site and alternates between an active, GTP-bound state and an inactive, GDP-bound state. Signaling by an activated GPCR promotes GDP release and GTP binding. The alpha subunit has a low GTPase activity that converts bound GTP to GDP, thereby terminating the signal. Both GDP release and GTP hydrolysis are modulated by numerous regulatory proteins. Signaling involves the activation of adenylyl cyclases, resulting in increased levels of the signaling molecule cAMP. Functions downstream of beta-adrenergic receptors. Stimulates the Ras signaling pathway via RAPGEF2. The chain is Guanine nucleotide-binding protein G(s) subunit alpha isoforms short (Gnas) from Mus musculus (Mouse).